The chain runs to 150 residues: Arginine repressor (150 aa).

Belongs to the ArgR family.

It is found in the cytoplasm. Its pathway is amino-acid biosynthesis; L-arginine biosynthesis [regulation]. In terms of biological role, regulates arginine biosynthesis genes. This chain is Arginine repressor, found in Clostridium botulinum (strain Alaska E43 / Type E3).